The sequence spans 185 residues: Ribosome-recycling factor (185 aa).

It belongs to the RRF family.

It is found in the cytoplasm. Functionally, responsible for the release of ribosomes from messenger RNA at the termination of protein biosynthesis. May increase the efficiency of translation by recycling ribosomes from one round of translation to another. The sequence is that of Ribosome-recycling factor from Alkalilimnicola ehrlichii (strain ATCC BAA-1101 / DSM 17681 / MLHE-1).